The primary structure comprises 129 residues: UPF0148 protein APE_0207 (129 aa).

Belongs to the UPF0148 family.

This is UPF0148 protein APE_0207 from Aeropyrum pernix (strain ATCC 700893 / DSM 11879 / JCM 9820 / NBRC 100138 / K1).